The chain runs to 469 residues: 3-isopropylmalate dehydratase large subunit 2 (469 aa).

Residues Cys-347, Cys-408, and Cys-411 each contribute to the [4Fe-4S] cluster site.

This sequence belongs to the aconitase/IPM isomerase family. LeuC type 1 subfamily. In terms of assembly, heterodimer of LeuC and LeuD. Requires [4Fe-4S] cluster as cofactor.

The catalysed reaction is (2R,3S)-3-isopropylmalate = (2S)-2-isopropylmalate. Its pathway is amino-acid biosynthesis; L-leucine biosynthesis; L-leucine from 3-methyl-2-oxobutanoate: step 2/4. Functionally, catalyzes the isomerization between 2-isopropylmalate and 3-isopropylmalate, via the formation of 2-isopropylmaleate. The chain is 3-isopropylmalate dehydratase large subunit 2 from Mannheimia succiniciproducens (strain KCTC 0769BP / MBEL55E).